The chain runs to 462 residues: Fumarate hydratase class II (462 aa).

Substrate contacts are provided by residues 97-99, 127-130, 137-139, and T185; these read SGT, HPND, and SSN. Residue H186 is the Proton donor/acceptor of the active site. The active site involves S316. Substrate contacts are provided by residues S317 and 322–324; that span reads KVN.

It belongs to the class-II fumarase/aspartase family. Fumarase subfamily. As to quaternary structure, homotetramer.

It is found in the cytoplasm. It catalyses the reaction (S)-malate = fumarate + H2O. Its pathway is carbohydrate metabolism; tricarboxylic acid cycle; (S)-malate from fumarate: step 1/1. Involved in the TCA cycle. Catalyzes the stereospecific interconversion of fumarate to L-malate. The sequence is that of Fumarate hydratase class II from Bacillus cereus (strain ATCC 14579 / DSM 31 / CCUG 7414 / JCM 2152 / NBRC 15305 / NCIMB 9373 / NCTC 2599 / NRRL B-3711).